Reading from the N-terminus, the 168-residue chain is Large ribosomal subunit protein uL10 (168 aa).

This sequence belongs to the universal ribosomal protein uL10 family. Part of the ribosomal stalk of the 50S ribosomal subunit. The N-terminus interacts with L11 and the large rRNA to form the base of the stalk. The C-terminus forms an elongated spine to which L12 dimers bind in a sequential fashion forming a multimeric L10(L12)X complex.

Functionally, forms part of the ribosomal stalk, playing a central role in the interaction of the ribosome with GTP-bound translation factors. In Pediococcus pentosaceus (strain ATCC 25745 / CCUG 21536 / LMG 10740 / 183-1w), this protein is Large ribosomal subunit protein uL10.